Reading from the N-terminus, the 312-residue chain is Porphobilinogen deaminase (312 aa).

At Cys-243 the chain carries S-(dipyrrolylmethanemethyl)cysteine.

It belongs to the HMBS family. Monomer. Requires dipyrromethane as cofactor.

It catalyses the reaction 4 porphobilinogen + H2O = hydroxymethylbilane + 4 NH4(+). It participates in porphyrin-containing compound metabolism; protoporphyrin-IX biosynthesis; coproporphyrinogen-III from 5-aminolevulinate: step 2/4. Functionally, tetrapolymerization of the monopyrrole PBG into the hydroxymethylbilane pre-uroporphyrinogen in several discrete steps. This Vibrio parahaemolyticus serotype O3:K6 (strain RIMD 2210633) protein is Porphobilinogen deaminase.